Reading from the N-terminus, the 150-residue chain is Ventricular natriuretic peptide (150 aa).

Residues 1–21 (MAKSGIYLGCFILILIQNMVA) form the signal peptide. Positions 52-75 (EEPEVYPESEDMKMDAEEEDAGIS) are disordered. C120 and C136 are joined by a disulfide.

It belongs to the natriuretic peptide family. Heart ventricle, and to a lower extent in heart atrium.

It localises to the secreted. Functionally, exhibits natriuretic and vasodepressor activity. In Anguilla japonica (Japanese eel), this protein is Ventricular natriuretic peptide (vnp).